The primary structure comprises 329 residues: Mas-related G-protein coupled receptor member X2 (329 aa).

Residues 1–33 lie on the Extracellular side of the membrane; the sequence is MDPTTPAWGTESTTMNGNDQALPLLCGKETMIS. A helical transmembrane segment spans residues 34–54; it reads VFLILFIALVGLVGNAFVLWL. At 55-63 the chain is on the cytoplasmic side; that stretch reads LGFRMRRNA. Residues 64–84 traverse the membrane as a helical segment; it reads FSVYVLSLAGADFLFLCFQMT. Residues 85–96 lie on the Extracellular side of the membrane; it reads SCLAYLINFFGS. The helical transmembrane segment at 97–116 threads the bilayer; it reads ISINIPSFFTVMTCAYLAGL. Residues 117-143 lie on the Cytoplasmic side of the membrane; it reads SMLSAISTERCLSVLWPIWYRCRRPRH. Residues 144–164 traverse the membrane as a helical segment; sequence LSAVMCVLLWALSLLLSILEG. At 165–183 the chain is on the extracellular side; it reads KFCGFLFSDDDPGWCQTFD. Residues 184–204 traverse the membrane as a helical segment; that stretch reads FITAAWLMFLFVVLCGSSLAL. At 205-227 the chain is on the cytoplasmic side; it reads LVRILCGSRSLPLTRLYLTILLT. The helical transmembrane segment at 228–248 threads the bilayer; that stretch reads VLIFLLCGLPFGIQWFLILWI. Over 249 to 263 the chain is Extracellular; sequence WKNSVVLFCHIHPIS. Residues 264–284 traverse the membrane as a helical segment; sequence VVLSSFNSSANPIIYFFVGSF. The Cytoplasmic segment spans residues 285 to 329; that stretch reads RKQWRLRQPILKLALQRALQDTAEVDHSEGCFSQGTLEMSRSSLV.

It belongs to the G-protein coupled receptor 1 family. Mas subfamily.

It localises to the cell membrane. Its function is as follows. Mast cell-specific receptor for basic secretagogues, i.e. cationic amphiphilic drugs, as well as endo- or exogenous peptides, consisting of a basic head group and a hydrophobic core. Recognizes and binds small molecules containing a cyclized tetrahydroisoquinoline (THIQ), such as non-steroidal neuromuscular blocking drugs (NMBDs), including tubocurarine and atracurium. In response to these compounds, mediates pseudo-allergic reactions characterized by histamine release, inflammation and airway contraction. The polypeptide is Mas-related G-protein coupled receptor member X2 (MRGPRX2) (Macaca mulatta (Rhesus macaque)).